The sequence spans 260 residues: Flap endonuclease Xni (260 aa).

Residue D109 coordinates Mg(2+). The 5'-3' exonuclease domain maps to 165-259 (VKPSQLADYW…DIRFTGPNKA (95 aa)). Residues L176, P185, V187, and I190 each coordinate K(+). The segment at 189–194 (GIGPKA) is interaction with DNA.

The protein belongs to the Xni family. The cofactor is Mg(2+). K(+) serves as cofactor.

Has flap endonuclease activity. During DNA replication, flap endonucleases cleave the 5'-overhanging flap structure that is generated by displacement synthesis when DNA polymerase encounters the 5'-end of a downstream Okazaki fragment. The polypeptide is Flap endonuclease Xni (Vibrio parahaemolyticus serotype O3:K6 (strain RIMD 2210633)).